Here is a 341-residue protein sequence, read N- to C-terminus: 4-(gamma-L-glutamylamino)butanoyl-[BtrI acyl-carrier protein] monooxygenase BtrO (341 aa).

The protein belongs to the bacterial luciferase oxidoreductase family.

The catalysed reaction is 4-(gamma-L-glutamylamino)butanoyl-[BtrI ACP] + FMNH2 + O2 = 4-(gamma-L-glutamylamino)-(2S)-2-hydroxybutanoyl-[BtrI ACP] + FMN + H2O + H(+). The protein operates within antibiotic biosynthesis; butirosin biosynthesis. Its function is as follows. Monooxygenase component of a two-component system involved in the biosynthesis of the side chain of the aminoglycoside antibiotics in the biosynthetic pathway of butirosin. Together with BtrV, mediates hydroxylation of gamma-L-Glu-GABA-S-BtrI. Not able to hydroxylate free substrates, activation by the acyl-carrier protein is mandatory. Octanoyl-S-[BtrI acyl-carrier protein] is also accepted as substrate. This chain is 4-(gamma-L-glutamylamino)butanoyl-[BtrI acyl-carrier protein] monooxygenase BtrO (btrO), found in Niallia circulans (Bacillus circulans).